Here is a 470-residue protein sequence, read N- to C-terminus: Serine/threonine-protein kinase-like protein At1g28390 (470 aa).

The 282-residue stretch at 52–333 (FSANNFLGKG…LEVVECLKTV (282 aa)) folds into the Protein kinase domain. ATP is bound by residues 58–66 (LGKGSHGRV) and K81. The active-site Proton acceptor is the D186. T221 and T226 each carry phosphothreonine. Residue Y234 is modified to Phosphotyrosine.

It belongs to the protein kinase superfamily. Ser/Thr protein kinase family.

It carries out the reaction L-seryl-[protein] + ATP = O-phospho-L-seryl-[protein] + ADP + H(+). It catalyses the reaction L-threonyl-[protein] + ATP = O-phospho-L-threonyl-[protein] + ADP + H(+). The chain is Serine/threonine-protein kinase-like protein At1g28390 from Arabidopsis thaliana (Mouse-ear cress).